Consider the following 173-residue polypeptide: ATP-dependent protease subunit HslV (173 aa).

Residue Thr-2 is part of the active site. Residues Gly-158, Asp-161, and Ser-164 each coordinate Na(+).

It belongs to the peptidase T1B family. HslV subfamily. In terms of assembly, a double ring-shaped homohexamer of HslV is capped on each side by a ring-shaped HslU homohexamer. The assembly of the HslU/HslV complex is dependent on binding of ATP.

Its subcellular location is the cytoplasm. The catalysed reaction is ATP-dependent cleavage of peptide bonds with broad specificity.. Allosterically activated by HslU binding. In terms of biological role, protease subunit of a proteasome-like degradation complex believed to be a general protein degrading machinery. The polypeptide is ATP-dependent protease subunit HslV (Haemophilus ducreyi (strain 35000HP / ATCC 700724)).